Here is a 57-residue protein sequence, read N- to C-terminus: COP9 signalosome complex subunit 9 (57 aa).

Belongs to the CSN9 family. As to quaternary structure, component of the CSN complex, probably composed of cops1, cops2, cops3, cops4, cops5, cops6, cops7, cops8 and cops9.

It localises to the nucleus. Its subcellular location is the cytoplasm. The protein localises to the nucleoplasm. Its function is as follows. Component of the COP9 signalosome complex (CSN), a complex involved in various cellular and developmental processes. The CSN complex is an essential regulator of the ubiquitin (Ubl) conjugation pathway by mediating the deneddylation of the cullin subunits of SCF-type E3 ligase complexes, leading to decrease the Ubl ligase activity. May play a role in cell proliferation. In Xenopus tropicalis (Western clawed frog), this protein is COP9 signalosome complex subunit 9.